The primary structure comprises 154 residues: Myoglobin (154 aa).

Residues 2-148 (GLSDQEWQQV…FRNDMASKYK (147 aa)) enclose the Globin domain. Position 65 (His65) interacts with nitrite. An O2-binding site is contributed by His65. Heme b is bound at residue His94.

Belongs to the globin family. As to quaternary structure, monomeric.

The protein localises to the cytoplasm. It is found in the sarcoplasm. It catalyses the reaction Fe(III)-heme b-[protein] + nitric oxide + H2O = Fe(II)-heme b-[protein] + nitrite + 2 H(+). The catalysed reaction is H2O2 + AH2 = A + 2 H2O. Functionally, monomeric heme protein which primary function is to store oxygen and facilitate its diffusion within muscle tissues. Reversibly binds oxygen through a pentacoordinated heme iron and enables its timely and efficient release as needed during periods of heightened demand. Depending on the oxidative conditions of tissues and cells, and in addition to its ability to bind oxygen, it also has a nitrite reductase activity whereby it regulates the production of bioactive nitric oxide. Under stress conditions, like hypoxia and anoxia, it also protects cells against reactive oxygen species thanks to its pseudoperoxidase activity. In Aethia pygmaea (Whiskered auklet), this protein is Myoglobin (MB).